The sequence spans 192 residues: Fe/S biogenesis protein NfuA (192 aa).

[4Fe-4S] cluster is bound by residues C149 and C152.

Belongs to the NfuA family. In terms of assembly, homodimer. It depends on [4Fe-4S] cluster as a cofactor.

Functionally, involved in iron-sulfur cluster biogenesis. Binds a 4Fe-4S cluster, can transfer this cluster to apoproteins, and thereby intervenes in the maturation of Fe/S proteins. Could also act as a scaffold/chaperone for damaged Fe/S proteins. The chain is Fe/S biogenesis protein NfuA from Colwellia psychrerythraea (strain 34H / ATCC BAA-681) (Vibrio psychroerythus).